Here is a 622-residue protein sequence, read N- to C-terminus: Cilia- and flagella-associated protein 206 (622 aa).

Residues 570-592 (SQVYPPKDTSTQSMREDSTGVPR) form a disordered region.

The protein belongs to the CFAP206 family.

Its subcellular location is the cytoplasm. The protein resides in the cytoskeleton. The protein localises to the cilium axoneme. It is found in the cilium basal body. Functionally, essential for sperm motility and is involved in the regulation of the beating frequency of motile cilia on the epithelial cells of the respiratory tract. Required for the establishment of radial spokes in sperm flagella. This is Cilia- and flagella-associated protein 206 from Homo sapiens (Human).